The chain runs to 250 residues: MSCNGCRVLRKGCSENCILRPCIQWIETADAQGHATVFVAKFFGRAGLMSFISAVPDSQRPALFQSLLYEACGRTVNPVNGAIGMLWTGNWNICQAAVETVLRGGSLRPIPELLTHGGGFAGFPSPTSEEASEICTEMLNLQQNDSTDRNIYHHSRFSSSRSRSTMDSSSPTKRKRLSSEDQPSSELDLSLIPNFPIKQATPSSTRRRSVTPSMNSEDSGTTTTTTAFCDKGDVYGNGGGETTKLLNLFV.

An LOB domain is found at 1 to 107 (MSCNGCRVLR…VETVLRGGSL (107 aa)). Positions 145-227 (DSTDRNIYHH…DSGTTTTTTA (83 aa)) are disordered. Residues 157 to 170 (FSSSRSRSTMDSSS) show a composition bias toward low complexity.

It belongs to the LOB domain-containing protein family. As to expression, expressed in young shoots, roots, stems, leaves and flowers.

This is LOB domain-containing protein 37 (LBD37) from Arabidopsis thaliana (Mouse-ear cress).